Reading from the N-terminus, the 177-residue chain is B-phycoerythrin beta chain (177 aa).

Phycourobilin is bound by residues Cys50 and Cys61. Asn72 carries the N4-methylasparagine modification. Residues Cys82 and Cys158 each coordinate (2R,3E)-phycoerythrobilin.

It belongs to the phycobiliprotein family. Heteromer of 6 alpha, 6 beta and one gamma chain. In terms of processing, contains two covalently linked phycoerythrobilin chromophores and one covalently linked phycourobilin chromophore.

It localises to the plastid. The protein resides in the chloroplast thylakoid membrane. Light-harvesting photosynthetic bile pigment-protein from the phycobiliprotein complex. The protein is B-phycoerythrin beta chain (cpeB) of Porphyridium sordidum (Red alga).